A 67-amino-acid polypeptide reads, in one-letter code: ATP synthase F(0) complex subunit 8 (67 aa).

Residues 8–24 (TWLIMILSMILTLFITF) traverse the membrane as a helical segment. The residue at position 54 (Lys54) is an N6-acetyllysine; alternate. The residue at position 54 (Lys54) is an N6-succinyllysine; alternate. At Lys57 the chain carries N6-acetyllysine.

The protein belongs to the ATPase protein 8 family. In terms of assembly, component of the ATP synthase complex composed at least of ATP5F1A/subunit alpha, ATP5F1B/subunit beta, ATP5MC1/subunit c (homooctomer), MT-ATP6/subunit a, MT-ATP8/subunit 8, ATP5ME/subunit e, ATP5MF/subunit f, ATP5MG/subunit g, ATP5MK/subunit k, ATP5MJ/subunit j, ATP5F1C/subunit gamma, ATP5F1D/subunit delta, ATP5F1E/subunit epsilon, ATP5PF/subunit F6, ATP5PB/subunit b, ATP5PD/subunit d, ATP5PO/subunit OSCP. ATP synthase complex consists of a soluble F(1) head domain (subunits alpha(3) and beta(3)) - the catalytic core - and a membrane F(0) domain - the membrane proton channel (subunits c, a, 8, e, f, g, k and j). These two domains are linked by a central stalk (subunits gamma, delta, and epsilon) rotating inside the F1 region and a stationary peripheral stalk (subunits F6, b, d, and OSCP). Interacts with PRICKLE3.

It localises to the mitochondrion membrane. Functionally, subunit 8, of the mitochondrial membrane ATP synthase complex (F(1)F(0) ATP synthase or Complex V) that produces ATP from ADP in the presence of a proton gradient across the membrane which is generated by electron transport complexes of the respiratory chain. ATP synthase complex consist of a soluble F(1) head domain - the catalytic core - and a membrane F(1) domain - the membrane proton channel. These two domains are linked by a central stalk rotating inside the F(1) region and a stationary peripheral stalk. During catalysis, ATP synthesis in the catalytic domain of F(1) is coupled via a rotary mechanism of the central stalk subunits to proton translocation. In vivo, can only synthesize ATP although its ATP hydrolase activity can be activated artificially in vitro. Part of the complex F(0) domain. This Phoca vitulina (Harbor seal) protein is ATP synthase F(0) complex subunit 8.